A 508-amino-acid chain; its full sequence is Methionine--tRNA ligase (508 aa).

The short motif at 12 to 22 is the 'HIGH' region element; it reads YYVNDVAHIGH. A 'KMSKS' region motif is present at residues 295–299; sequence KISKS. Lys-298 is a binding site for ATP.

Belongs to the class-I aminoacyl-tRNA synthetase family. MetG type 2B subfamily. Monomer.

It is found in the cytoplasm. The catalysed reaction is tRNA(Met) + L-methionine + ATP = L-methionyl-tRNA(Met) + AMP + diphosphate. Functionally, is required not only for elongation of protein synthesis but also for the initiation of all mRNA translation through initiator tRNA(fMet) aminoacylation. This Rickettsia prowazekii (strain Madrid E) protein is Methionine--tRNA ligase (metG).